The sequence spans 467 residues: Argininosuccinate lyase (467 aa).

This sequence belongs to the lyase 1 family. Argininosuccinate lyase subfamily.

It is found in the cytoplasm. The enzyme catalyses 2-(N(omega)-L-arginino)succinate = fumarate + L-arginine. It functions in the pathway amino-acid biosynthesis; L-arginine biosynthesis; L-arginine from L-ornithine and carbamoyl phosphate: step 3/3. The sequence is that of Argininosuccinate lyase from Rhizobium etli (strain CIAT 652).